Reading from the N-terminus, the 133-residue chain is Holo-[acyl-carrier-protein] synthase (133 aa).

Residues Asp-8 and Glu-57 each coordinate Mg(2+).

This sequence belongs to the P-Pant transferase superfamily. AcpS family. Requires Mg(2+) as cofactor.

It localises to the cytoplasm. It catalyses the reaction apo-[ACP] + CoA = holo-[ACP] + adenosine 3',5'-bisphosphate + H(+). Functionally, transfers the 4'-phosphopantetheine moiety from coenzyme A to a Ser of acyl-carrier-protein. The sequence is that of Holo-[acyl-carrier-protein] synthase from Parvibaculum lavamentivorans (strain DS-1 / DSM 13023 / NCIMB 13966).